The chain runs to 135 residues: Mediator of RNA polymerase II transcription subunit 10 (135 aa).

It belongs to the Mediator complex subunit 10 family. In terms of assembly, component of the Mediator complex, which is composed of MED1, MED4, MED6, MED7, MED8, MED9, MED10, MED11, MED12, MED13, MED13L, MED14, MED15, MED16, MED17, MED18, MED19, MED20, MED21, MED22, MED23, MED24, MED25, MED26, MED27, MED29, MED30, MED31, CCNC, CDK8 and CDC2L6/CDK11. The MED12, MED13, CCNC and CDK8 subunits form a distinct module termed the CDK8 module. Mediator containing the CDK8 module is less active than Mediator lacking this module in supporting transcriptional activation. Individual preparations of the Mediator complex lacking one or more distinct subunits have been variously termed ARC, CRSP, DRIP, PC2, SMCC and TRAP.

The protein resides in the nucleus. Functionally, component of the Mediator complex, a coactivator involved in the regulated transcription of nearly all RNA polymerase II-dependent genes. Mediator functions as a bridge to convey information from gene-specific regulatory proteins to the basal RNA polymerase II transcription machinery. Mediator is recruited to promoters by direct interactions with regulatory proteins and serves as a scaffold for the assembly of a functional preinitiation complex with RNA polymerase II and the general transcription factors. The sequence is that of Mediator of RNA polymerase II transcription subunit 10 (MED10) from Macaca fascicularis (Crab-eating macaque).